Here is a 320-residue protein sequence, read N- to C-terminus: D-alanine--D-alanine ligase (320 aa).

Residues 120-314 (SSWFFANSIN…FTNLIAEIIK (195 aa)) enclose the ATP-grasp domain. 147-198 (MKRPYVIKPLTQGSSIGVEVIFEEDDFNFADYDFPYGDQVVIERYIKGREFQ) provides a ligand contact to ATP. Positions 267, 281, and 283 each coordinate Mg(2+).

Belongs to the D-alanine--D-alanine ligase family. Mg(2+) serves as cofactor. The cofactor is Mn(2+).

Its subcellular location is the cytoplasm. It catalyses the reaction 2 D-alanine + ATP = D-alanyl-D-alanine + ADP + phosphate + H(+). Its pathway is cell wall biogenesis; peptidoglycan biosynthesis. Cell wall formation. This chain is D-alanine--D-alanine ligase, found in Rickettsia akari (strain Hartford).